A 1161-amino-acid polypeptide reads, in one-letter code: Nardilysin (1161 aa).

Positions 1 to 18 (MLRRVAVAAVFATGRKLR) are cleaved as a signal peptide. Disordered stretches follow at residues 42–105 (KPFP…KSPS) and 130–218 (VEGK…KKTT). Residues Ser-85, Ser-91, and Ser-93 each carry the phosphoserine modification. Positions 138-209 (TDEEEEEEEE…EENELEELEE (72 aa)) are enriched in acidic residues. A Zn(2+)-binding site is contributed by His-244. The Proton acceptor role is filled by Glu-247. 2 residues coordinate Zn(2+): His-248 and Glu-325.

Belongs to the peptidase M16 family. As to quaternary structure, interacts with BACE1 and NRG1. Zn(2+) serves as cofactor. In terms of tissue distribution, testis, and in a lower level in brain, heart and adrenal glands.

It is found in the mitochondrion. It localises to the cell projection. The protein localises to the dendrite. The catalysed reaction is Hydrolysis of polypeptides, preferably at -Xaa-|-Arg-Lys-, and less commonly at -Arg-|-Arg-Xaa-, in which Xaa is not Arg or Lys.. Cleaves peptide substrates on the N-terminus of arginine residues in dibasic pairs. Is a critical activator of BACE1- and ADAM17-mediated pro-neuregulin ectodomain shedding, involved in the positive regulation of axonal maturation and myelination. Required for proper functioning of 2-oxoglutarate dehydrogenase (OGDH). In Rattus norvegicus (Rat), this protein is Nardilysin.